Here is a 579-residue protein sequence, read N- to C-terminus: Potassium-transporting ATPase potassium-binding subunit (579 aa).

Helical transmembrane passes span 2–22 (MNLV…AIPL), 66–86 (SFSV…LHIF), 135–155 (GLTV…FALI), 177–197 (VLYI…SQGV), 260–280 (TILS…ALCF), 292–312 (GIAI…IVGV), 391–411 (VFGG…LAVF), 437–457 (VLVC…ASIL), 490–510 (FAGF…SMIF), and 546–566 (FIGL…FPAL).

It belongs to the KdpA family. As to quaternary structure, the system is composed of three essential subunits: KdpA, KdpB and KdpC.

Its subcellular location is the cell membrane. Part of the high-affinity ATP-driven potassium transport (or Kdp) system, which catalyzes the hydrolysis of ATP coupled with the electrogenic transport of potassium into the cytoplasm. This subunit binds the extracellular potassium ions and delivers the ions to the membrane domain of KdpB through an intramembrane tunnel. This is Potassium-transporting ATPase potassium-binding subunit from Clostridium botulinum (strain Eklund 17B / Type B).